Reading from the N-terminus, the 428-residue chain is Ectoine/5-hydroxyectoine TRAP transporter large permease protein UehC (428 aa).

12 helical membrane-spanning segments follow: residues methionine 9 to isoleucine 29, leucine 49 to isoleucine 69, alanine 99 to isoleucine 119, alanine 139 to isoleucine 159, phenylalanine 172 to isoleucine 192, alanine 217 to serine 237, alanine 242 to leucine 262, glycine 273 to isoleucine 293, isoleucine 302 to isoleucine 322, phenylalanine 324 to phenylalanine 344, valine 366 to phenylalanine 386, and phenylalanine 400 to phenylalanine 420.

Belongs to the TRAP transporter large permease family. In terms of assembly, the complex comprises the extracytoplasmic solute receptor protein UehA, and the two transmembrane proteins UehB and UehC.

Its subcellular location is the cell inner membrane. Part of the tripartite ATP-independent periplasmic (TRAP) transport system UehABC, which imports both ectoine and 5-hydroxyectoine as nutrients, and not as osmoprotectants. The polypeptide is Ectoine/5-hydroxyectoine TRAP transporter large permease protein UehC (Ruegeria pomeroyi (strain ATCC 700808 / DSM 15171 / DSS-3) (Silicibacter pomeroyi)).